Consider the following 207-residue polypeptide: Phosphatidylinositol phosphate synthase (207 aa).

2 consecutive transmembrane segments (helical) span residues 21-44 and 50-67; these read LRAHVTPDVVTWIGTIGAVLMALI and WLWQGPWLVTLFIFSDSL. 28–31 lines the a CDP-1,2-diacyl-sn-glycerol pocket; sequence DVVT. Residues Asp65 and Asp68 each contribute to the Mg(2+) site. Gly69, Arg73, and Ser79 together coordinate a CDP-1,2-diacyl-sn-glycerol. Asp86 and Asp90 together coordinate Mg(2+). Helical transmembrane passes span 88–106, 112–131, 152–170, and 176–195; these read TLDRFGDAAIFTGVALYFA, VLWTAMACAALVFGMATSYV, RLLVSLVAIEITGLARVGA, and VVALPIALCYLTLAGAITVV. The Proton acceptor role is filled by Asp90.

Belongs to the CDP-alcohol phosphatidyltransferase class-I family. Homodimer. Mg(2+) serves as cofactor.

Its subcellular location is the cell membrane. It carries out the reaction a CDP-1,2-diacyl-sn-glycerol + 1D-myo-inositol 3-phosphate = a 1,2-diacyl-sn-glycero-3-phospho-(1D-myo-inositol-3-phosphate) + CMP + H(+). The enzyme catalyses 1,2-di-(9Z-octadecenoyl)-sn-glycero-3-cytidine-5'-diphosphate + 1D-myo-inositol 3-phosphate = 1,2-di-(9Z-octadecenoyl)-sn-glycero-3-phospho-(1D-myo-inositol-3-phosphate) + CMP + H(+). It participates in phospholipid metabolism; phosphatidylinositol phosphate biosynthesis. Its function is as follows. Catalyzes the conjugation of the 1'-hydroxyl group of D-myo-inositol-3-phosphate (also named L-myo-inositol-1-phosphate) with a lipid tail of cytidine diphosphate diacylglycerol (CDP-DAG), forming phosphatidylinositol phosphate (PIP) and CMP. PIP is a precursor of phosphatidylinositol (PI) which is an essential lipid required for cell wall formation. The polypeptide is Phosphatidylinositol phosphate synthase (Cutibacterium acnes (strain DSM 16379 / KPA171202) (Propionibacterium acnes)).